The sequence spans 763 residues: Transferrin receptor protein 1 (763 aa).

Topologically, residues 1 to 67 are cytoplasmic; the sequence is MMDQARSAFS…KPKRFNGRLC (67 aa). Residues 1 to 67 are mediates interaction with SH3BP4; it reads MMDQARSAFS…KPKRFNGRLC (67 aa). Residues serine 10 and serine 19 each carry the phosphoserine modification. Phosphotyrosine is present on tyrosine 20. Positions 20-23 match the Endocytosis signal motif; the sequence is YTRF. At threonine 21 the chain carries Phosphothreonine. Position 24 is a phosphoserine (serine 24). The Stop-transfer sequence signature appears at 58-61; that stretch reads KPKR. Residue cysteine 67 is the site of S-palmitoyl cysteine attachment. A helical; Signal-anchor for type II membrane protein membrane pass occupies residues 68–88; that stretch reads FAAIALVIFFLIGFMSGYLGY. Residues 89–763 are Extracellular-facing; it reads CKRVEQKEEC…GDIWNIDNEF (675 aa). Residue threonine 104 is glycosylated (O-linked (GalNAc...) threonine). The region spanning 225 to 315 is the PA domain; that stretch reads SKPTEVSGKL…GTGDPYTPGF (91 aa). Residues asparagine 253 and asparagine 319 are each glycosylated (N-linked (GlcNAc...) asparagine). Residues 572–763 are ligand-binding; that stretch reads RLDTYEALTQ…GDIWNIDNEF (192 aa). Residues 649–651 carry the Cell attachment site motif; sequence RGD. Residues asparagine 725 and asparagine 730 are each glycosylated (N-linked (GlcNAc...) asparagine).

This sequence belongs to the peptidase M28 family. M28B subfamily. As to quaternary structure, homodimer; disulfide-linked. Binds one transferrin molecule per subunit. Interacts with SH3BP4. Interacts with STEAP3; facilitates TFRC endocytosis in erythroid precursor cells. Post-translationally, stearoylated by ZDHHC6 which inhibits TFRC-mediated activation of the JNK pathway and promotes mitochondrial fragmentation. Stearoylation does not affect iron uptake. N- and O-glycosylated, phosphorylated and palmitoylated.

The protein resides in the cell membrane. It localises to the melanosome. In terms of biological role, cellular uptake of iron occurs via receptor-mediated endocytosis of ligand-occupied transferrin receptor into specialized endosomes. Endosomal acidification leads to iron release. The apotransferrin-receptor complex is then recycled to the cell surface with a return to neutral pH and the concomitant loss of affinity of apotransferrin for its receptor. Transferrin receptor is necessary for development of erythrocytes and the nervous system. Upon stimulation, positively regulates T and B cell proliferation through iron uptake. Acts as a lipid sensor that regulates mitochondrial fusion by regulating activation of the JNK pathway. When dietary levels of stearate (C18:0) are low, promotes activation of the JNK pathway, resulting in HUWE1-mediated ubiquitination and subsequent degradation of the mitofusin MFN2 and inhibition of mitochondrial fusion. When dietary levels of stearate (C18:0) are high, TFRC stearoylation inhibits activation of the JNK pathway and thus degradation of the mitofusin MFN2. Mediates uptake of NICOL1 into fibroblasts where it may regulate extracellular matrix production. This is Transferrin receptor protein 1 (Tfrc) from Mus musculus (Mouse).